The following is a 91-amino-acid chain: Tachykinin-like peptide (91 aa).

The signal sequence occupies residues 1-19 (MKILVAFAVIMLVSAQVLA). Residues 20-51 (AEIGLNDEPEWYSDQIQEDLPVFENFLQRIAR) constitute a propeptide that is removed on maturation. Met62 carries the methionine amide modification. A disordered region spans residues 64-91 (KRNNGFGQMSRKRSAERNTIHNYERRRK). Positions 66-91 (NNGFGQMSRKRSAERNTIHNYERRRK) are excised as a propeptide. Basic and acidic residues predominate over residues 76-91 (RSAERNTIHNYERRRK).

In terms of tissue distribution, expressed by the skin glands.

The protein localises to the secreted. Tachykinins are active peptides which excite neurons, evoke behavioral responses, are potent vasodilators and secretagogues, and contract (directly or indirectly) many smooth muscles. In vitro, induces contraction of guinea pig ileum smooth muscle in a dose-dependent manner. This chain is Tachykinin-like peptide, found in Theloderma corticale (Kwangsi warty tree frog).